Here is a 342-residue protein sequence, read N- to C-terminus: 4-hydroxy-2-oxovalerate aldolase (342 aa).

In terms of domain architecture, Pyruvate carboxyltransferase spans 7-259 (ILVHDMSLRD…CTGVDLGRIQ (253 aa)). 15–16 (RD) lines the substrate pocket. Residue D16 coordinates Mn(2+). H19 acts as the Proton acceptor in catalysis. Residues S169 and H198 each coordinate substrate. The Mn(2+) site is built by H198 and H200. Y289 is a binding site for substrate.

Belongs to the 4-hydroxy-2-oxovalerate aldolase family.

The enzyme catalyses (S)-4-hydroxy-2-oxopentanoate = acetaldehyde + pyruvate. The polypeptide is 4-hydroxy-2-oxovalerate aldolase (Alkalilimnicola ehrlichii (strain ATCC BAA-1101 / DSM 17681 / MLHE-1)).